Reading from the N-terminus, the 533-residue chain is NEDD8-activating enzyme E1 regulatory subunit (533 aa).

The tract at residues 330-343 is interaction with uba3; that stretch reads DMIADSDKFIKLQN.

This sequence belongs to the ubiquitin-activating E1 family. ULA1 subfamily. In terms of assembly, heterodimer of uba3 and nae1. The complex binds nedd8 and ube2m.

It functions in the pathway protein modification; protein neddylation. Regulatory subunit of the dimeric uba3-nae1 E1 enzyme. E1 activates nedd8 by first adenylating its C-terminal glycine residue with ATP, thereafter linking this residue to the side chain of the catalytic cysteine, yielding a nedd8-uba3 thioester and free AMP. E1 finally transfers nedd8 to the catalytic cysteine of ube2m. The covalent attachment of nedd8 to target proteins is known as 'neddylation' and the process is involved in the regulation of cell growth, viability and development. The polypeptide is NEDD8-activating enzyme E1 regulatory subunit (nae1) (Danio rerio (Zebrafish)).